Consider the following 45-residue polypeptide: Large ribosomal subunit protein bL34 (45 aa).

Residues 1–24 (MTKRTFGGTSRKRKRVSGFRVRMR) form a disordered region. The span at 10–24 (SRKRKRVSGFRVRMR) shows a compositional bias: basic residues.

Belongs to the bacterial ribosomal protein bL34 family.

In Prochlorococcus marinus (strain MIT 9303), this protein is Large ribosomal subunit protein bL34.